Reading from the N-terminus, the 297-residue chain is HTH-type transcriptional regulator ArgP (297 aa).

One can recognise an HTH lysR-type domain in the interval 4–60 (PDYRTLQALDAVIRERGFERAAQKLCITQSAVSQRIKQLENMFGQPLLVRTVPPRPT). Positions 21 to 40 (FERAAQKLCITQSAVSQRIK) form a DNA-binding region, H-T-H motif.

This sequence belongs to the LysR transcriptional regulatory family. As to quaternary structure, homodimer.

Its function is as follows. Controls the transcription of genes involved in arginine and lysine metabolism. This Escherichia coli O127:H6 (strain E2348/69 / EPEC) protein is HTH-type transcriptional regulator ArgP.